A 146-amino-acid chain; its full sequence is Hemoglobin subunit beta (146 aa).

Valine 1 is modified (N-acetylvaline). One can recognise a Globin domain in the interval 2-146; sequence HLTPEEKSAV…VANALAHKYH (145 aa). The residue at position 12 (threonine 12) is a Phosphothreonine. Serine 44 carries the phosphoserine modification. Position 59 is an N6-acetyllysine (lysine 59). Histidine 63 is a heme b binding site. Lysine 82 is subject to N6-acetyllysine. Residue histidine 92 participates in heme b binding. Cysteine 93 bears the S-nitrosocysteine mark. Position 144 is an N6-acetyllysine (lysine 144).

It belongs to the globin family. In terms of assembly, heterotetramer of two alpha chains and two beta chains. In terms of tissue distribution, red blood cells.

In terms of biological role, involved in oxygen transport from the lung to the various peripheral tissues. The sequence is that of Hemoglobin subunit beta (HBB) from Hylobates lar (Lar gibbon).